The primary structure comprises 926 residues: Periplasmic nitrate reductase (926 aa).

Positions 1 to 30 (MNRRDFIKSAAASAACASAGIAIPANLSAA) form a signal peptide, tat-type signal. The 57-residue stretch at 37 to 93 (WRWDKAACRFCGTGCGIMVATKEGKIVAVKGDPEAPVNRGLNCIKGYFNAKIMYGED) folds into the 4Fe-4S Mo/W bis-MGD-type domain. The [4Fe-4S] cluster site is built by Cys44, Cys47, Cys51, and Cys79. Mo-bis(molybdopterin guanine dinucleotide) contacts are provided by residues Lys81, Gln149, Asn174, Cys178, 211–218 (WGANMAEM), Met419, Gln423, Asn529, 554–555 (SD), Lys577, Asp604, and 816–825 (TGRVLEHWHS). Trp892 provides a ligand contact to substrate. Mo-bis(molybdopterin guanine dinucleotide) contacts are provided by Asn900 and Lys917.

The protein belongs to the prokaryotic molybdopterin-containing oxidoreductase family. NasA/NapA/NarB subfamily. Component of the periplasmic nitrate reductase NapAB complex composed of NapA and NapB. [4Fe-4S] cluster is required as a cofactor. Mo-bis(molybdopterin guanine dinucleotide) serves as cofactor. In terms of processing, predicted to be exported by the Tat system. The position of the signal peptide cleavage has not been experimentally proven.

The protein localises to the periplasm. It catalyses the reaction 2 Fe(II)-[cytochrome] + nitrate + 2 H(+) = 2 Fe(III)-[cytochrome] + nitrite + H2O. Its function is as follows. Catalytic subunit of the periplasmic nitrate reductase complex NapAB. Receives electrons from NapB and catalyzes the reduction of nitrate to nitrite. The protein is Periplasmic nitrate reductase of Campylobacter curvus (strain 525.92).